Here is a 962-residue protein sequence, read N- to C-terminus: Protease 3 (962 aa).

The signal sequence occupies residues 1-23 (MPRSTWFKALLLLVALWAPLSQA). Zn(2+) is bound at residue His-88. Residue Glu-91 is the Proton acceptor of the active site. Residues His-92 and Glu-169 each contribute to the Zn(2+) site.

The protein belongs to the peptidase M16 family. As to quaternary structure, monomer. Zn(2+) is required as a cofactor.

The protein resides in the periplasm. The enzyme catalyses Preferential cleavage of 16-Tyr-|-Leu-17 and 25-Phe-|-Tyr-26 bonds of oxidized insulin B chain. Also acts on other substrates of Mw less than 7 kDa such as insulin and glucagon.. In terms of biological role, endopeptidase that degrades small peptides of less than 7 kDa, such as glucagon and insulin. The sequence is that of Protease 3 (ptrA) from Escherichia coli O157:H7.